We begin with the raw amino-acid sequence, 239 residues long: Ribosomal RNA small subunit methyltransferase G (239 aa).

S-adenosyl-L-methionine-binding positions include G77, F82, 128–129 (AE), and R147. The interval 215–239 (IRKTKSTPKKYPRKPGTPNKSPIEG) is disordered. Over residues 216–227 (RKTKSTPKKYPR) the composition is skewed to basic residues.

Belongs to the methyltransferase superfamily. RNA methyltransferase RsmG family.

The protein resides in the cytoplasm. In terms of biological role, specifically methylates the N7 position of guanine in position 535 of 16S rRNA. The chain is Ribosomal RNA small subunit methyltransferase G from Bacillus velezensis (strain DSM 23117 / BGSC 10A6 / LMG 26770 / FZB42) (Bacillus amyloliquefaciens subsp. plantarum).